Here is a 272-residue protein sequence, read N- to C-terminus: Undecaprenyl-diphosphatase (272 aa).

8 consecutive transmembrane segments (helical) span residues 2-22 (LELI…WLPI), 50-70 (VIQL…LFPF), 83-103 (FSLW…GVPF), 110-130 (LFYN…LFII), 148-168 (LGYK…IPGT), 195-215 (LAIP…GFAF), 220-240 (LIIL…AIKF), and 250-270 (FKAF…YFLA).

This sequence belongs to the UppP family.

The protein resides in the cell membrane. It catalyses the reaction di-trans,octa-cis-undecaprenyl diphosphate + H2O = di-trans,octa-cis-undecaprenyl phosphate + phosphate + H(+). In terms of biological role, catalyzes the dephosphorylation of undecaprenyl diphosphate (UPP). Confers resistance to bacitracin. The sequence is that of Undecaprenyl-diphosphatase from Acetivibrio thermocellus (strain ATCC 27405 / DSM 1237 / JCM 9322 / NBRC 103400 / NCIMB 10682 / NRRL B-4536 / VPI 7372) (Clostridium thermocellum).